A 445-amino-acid chain; its full sequence is tRNA-2-methylthio-N(6)-dimethylallyladenosine synthase (445 aa).

An MTTase N-terminal domain is found at 3–120 (RKLFIQTHGC…LPGLITQAAS (118 aa)). Residues cysteine 12, cysteine 49, cysteine 83, cysteine 157, cysteine 161, and cysteine 164 each coordinate [4Fe-4S] cluster. Residues 143-375 (SVDGPSAFVS…QQRINQNVQD (233 aa)) enclose the Radical SAM core domain. The TRAM domain maps to 378-442 (RKMVGSTQRI…SNSLLGTDPR (65 aa)).

This sequence belongs to the methylthiotransferase family. MiaB subfamily. Monomer. [4Fe-4S] cluster is required as a cofactor.

It is found in the cytoplasm. The catalysed reaction is N(6)-dimethylallyladenosine(37) in tRNA + (sulfur carrier)-SH + AH2 + 2 S-adenosyl-L-methionine = 2-methylsulfanyl-N(6)-dimethylallyladenosine(37) in tRNA + (sulfur carrier)-H + 5'-deoxyadenosine + L-methionine + A + S-adenosyl-L-homocysteine + 2 H(+). Its function is as follows. Catalyzes the methylthiolation of N6-(dimethylallyl)adenosine (i(6)A), leading to the formation of 2-methylthio-N6-(dimethylallyl)adenosine (ms(2)i(6)A) at position 37 in tRNAs that read codons beginning with uridine. The polypeptide is tRNA-2-methylthio-N(6)-dimethylallyladenosine synthase (Alcanivorax borkumensis (strain ATCC 700651 / DSM 11573 / NCIMB 13689 / SK2)).